Consider the following 657-residue polypeptide: MGEEDYYLELCERPVQFEKANPVNCVFFDEANKQVFAVRSGGATGVVVKGPDDRNPISFRMDDKGEVKCIKFSLENKILAVQRTSKTVDFCNFIPDNSQLEYTQECKTKNANILGFCWTSSTEIVFITDQGIEFYQVLPEKRSLKLLKSHNLNVNWYMYCPESAVILLSTTVLENVLQPFHFRAGTMSKLPKFEIELPAAPKSTKPSLSERDIAMATIYGQLYVLFLRHHSRTSNSTGAEVVLYHLPREGACKKMHILKLNRTGKFALNVVDNLVVVHHQDTETSVIFDIKLRGEFDGSVTFHHPVLPARSIQPYQIPITGPAAVTSQSPVPCKLYSSSWIVFQPDIIISASQGYLWNLQVKLEPIVNLLPDKGRLMDFLLQRKECKMVILSVCSQMLSESDRASLPVIATVFDKLNHEYKKYLDAEQSYAMAVEAGQSRSSPLLKRPVRTQAVLDQSDVYTHVLSAFVEKKEMPHKFVIAVLMEYIRSLNQFQIAVQHYLHELVIKTLVQHNLFYMLHQFLQYHVLSDSKPLACLLLSLESFYPPAHQLSLDMLKRLSTANDEIVEVLLSKHQVLAALRFIRGIGGHDNISARKFLDAAKQTEDNMLFYTIFRFFEQRNQRLRGSPNFTPGEHCEEHVAFFKQIFGDQALMRPTTF.

Positions 471–637 (KKEMPHKFVI…NFTPGEHCEE (167 aa)) constitute a Mic1 domain.

Belongs to the RMC1 family. Found in a complex with RMC1, CCZ1 MON1A and MON1B.

It localises to the lysosome membrane. The protein localises to the late endosome membrane. In terms of biological role, component of the CCZ1-MON1 RAB7A guanine exchange factor (GEF). Acts as a positive regulator of CCZ1-MON1A/B function necessary for endosomal/autophagic flux and efficient RAB7A localization. The protein is Regulator of MON1-CCZ1 complex of Homo sapiens (Human).